The sequence spans 249 residues: Adapter protein MecA (249 aa).

The protein belongs to the MecA family. In terms of assembly, homodimer.

Functionally, enables the recognition and targeting of unfolded and aggregated proteins to the ClpC protease or to other proteins involved in proteolysis. This Streptococcus thermophilus (strain ATCC BAA-491 / LMD-9) protein is Adapter protein MecA.